The chain runs to 328 residues: Probable magnesium transporter NIPA6 (328 aa).

Residues 1–4 (METD) are Extracellular-facing. Residues 5–25 (NGKGLILAVASSVFIGSSFIL) traverse the membrane as a helical segment. Topologically, residues 26-51 (KKKGLKRAGAIGTRAGYGGYTYLLEP) are cytoplasmic. Residues 52 to 72 (LWWAGMVTMIVGEAANFVAYI) form a helical membrane-spanning segment. The Extracellular segment spans residues 73–76 (YAPA). A helical transmembrane segment spans residues 77–97 (VLVTPLGALSIIISAVLAHFL). Topologically, residues 98–104 (LKEKLKK) are cytoplasmic. The helical transmembrane segment at 105–125 (MGVLGCVSCIVGSVVIVIHAP) threads the bilayer. Residues 126 to 142 (KEQTPNSVEEIWNLATQ) lie on the Extracellular side of the membrane. A helical transmembrane segment spans residues 143–163 (PAFLIYVAITMSIVLALILHF). Over 164–175 (EPLCGQTNILVY) the chain is Cytoplasmic. A helical transmembrane segment spans residues 176–196 (IGICSLMGALTVMSIKAIGIA). At 197–209 (IKLTMEGVSQIGY) the chain is on the extracellular side. A helical membrane pass occupies residues 210–230 (PQTWLFVMVAVTCVVTQLIYL). Residues 231 to 240 (NKALDTFNAA) lie on the Cytoplasmic side of the membrane. A helical membrane pass occupies residues 241 to 261 (IVSPVYYVMFTTLTIVASAIM). The Extracellular portion of the chain corresponds to 262–269 (FKDWSGQD). Residues 270-290 (AASVASELCGFITVLTGTMIL) form a helical membrane-spanning segment. The Cytoplasmic segment spans residues 291-328 (HGTREEEQQQASSEHVRWYDSRKSMNEEHLVSLYSPEY).

This sequence belongs to the NIPA (TC 2.A.7) family. Homodimer.

It localises to the cell membrane. The protein localises to the early endosome. In terms of biological role, acts as a Mg(2+) transporter. Can also transport other divalent cations such as Fe(2+), Sr(2+), Ba(2+), Mn(2+) and Co(2+) but to a much less extent than Mg(2+). This is Probable magnesium transporter NIPA6 from Arabidopsis thaliana (Mouse-ear cress).